The following is a 209-amino-acid chain: Claudin-like protein ZF-A9 (209 aa).

4 consecutive transmembrane segments (helical) span residues 8-28 (LGTT…AIPL), 81-101 (AILV…FAGG), 114-134 (ALVA…GLVP), and 159-179 (FGAA…GGGL). The interval 187–209 (GRTSSRGRYTPASQNGRERSEYV) is disordered. Polar residues predominate over residues 188 to 201 (RTSSRGRYTPASQN).

This sequence belongs to the claudin family.

Its subcellular location is the cell membrane. It is found in the cell junction. The protein resides in the tight junction. Component of tight junction (TJ) strands. The protein is Claudin-like protein ZF-A9 (cldng) of Danio rerio (Zebrafish).